Consider the following 368-residue polypeptide: Phospho-N-acetylmuramoyl-pentapeptide-transferase (368 aa).

The next 9 membrane-spanning stretches (helical) occupy residues 30-50, 72-92, 95-115, 139-159, 169-189, 208-228, 238-258, 264-286, and 345-365; these read AAAITALLITLFVGPGFIKYL, LPTMGGLLIIFSIEISVLLWS, IDPHVWLIMLAILWMGIIGFI, VTLGLVVGCYTWYDPSFSVLL, YLTIDYGYFYIPIVIFIITAV, AIVVMGLGGFSYLAGNAVYAV, GGEIAVVSMAIVMACVGFLWF, EIIMGDTGSLALGSAIAVIALLI, and KIVIRFWILTILFFLASLMTL.

Belongs to the glycosyltransferase 4 family. MraY subfamily. The cofactor is Mg(2+).

It localises to the cell inner membrane. It carries out the reaction UDP-N-acetyl-alpha-D-muramoyl-L-alanyl-gamma-D-glutamyl-meso-2,6-diaminopimeloyl-D-alanyl-D-alanine + di-trans,octa-cis-undecaprenyl phosphate = di-trans,octa-cis-undecaprenyl diphospho-N-acetyl-alpha-D-muramoyl-L-alanyl-D-glutamyl-meso-2,6-diaminopimeloyl-D-alanyl-D-alanine + UMP. It functions in the pathway cell wall biogenesis; peptidoglycan biosynthesis. In terms of biological role, catalyzes the initial step of the lipid cycle reactions in the biosynthesis of the cell wall peptidoglycan: transfers peptidoglycan precursor phospho-MurNAc-pentapeptide from UDP-MurNAc-pentapeptide onto the lipid carrier undecaprenyl phosphate, yielding undecaprenyl-pyrophosphoryl-MurNAc-pentapeptide, known as lipid I. In Pelodictyon phaeoclathratiforme (strain DSM 5477 / BU-1), this protein is Phospho-N-acetylmuramoyl-pentapeptide-transferase.